A 193-amino-acid polypeptide reads, in one-letter code: 3-isopropylmalate dehydratase small subunit (193 aa).

Belongs to the LeuD family. LeuD type 1 subfamily. Heterodimer of LeuC and LeuD.

The catalysed reaction is (2R,3S)-3-isopropylmalate = (2S)-2-isopropylmalate. It participates in amino-acid biosynthesis; L-leucine biosynthesis; L-leucine from 3-methyl-2-oxobutanoate: step 2/4. Its function is as follows. Catalyzes the isomerization between 2-isopropylmalate and 3-isopropylmalate, via the formation of 2-isopropylmaleate. This Listeria monocytogenes serovar 1/2a (strain ATCC BAA-679 / EGD-e) protein is 3-isopropylmalate dehydratase small subunit.